Here is a 348-residue protein sequence, read N- to C-terminus: 4-hydroxyphenylpyruvate dioxygenase (348 aa).

2 VOC domains span residues 11 to 141 (GFAF…ITSS) and 151 to 303 (AIDH…IFTE). Fe cation contacts are provided by His154, His232, and Glu312.

The protein belongs to the 4HPPD family. Requires Fe cation as cofactor.

It catalyses the reaction 3-(4-hydroxyphenyl)pyruvate + O2 = homogentisate + CO2. Its function is as follows. Catalyzes the transformation of p-hydroxyphenylpyruvate into HGA. Has hemolytic and brown pigment production activity. The chain is 4-hydroxyphenylpyruvate dioxygenase (lly) from Legionella pneumophila (strain Corby).